A 304-amino-acid polypeptide reads, in one-letter code: GTPase Era (304 aa).

The region spanning 9 to 176 (KSGFVSIIGR…LLEITKHLSE (168 aa)) is the Era-type G domain. Positions 17 to 24 (GRPNVGKS) are G1. 17–24 (GRPNVGKS) contributes to the GTP binding site. A G2 region spans residues 43 to 47 (QTTRN). The G3 stretch occupies residues 64-67 (DTPG). Residues 64–68 (DTPGI) and 126–129 (NKID) each bind GTP. The interval 126 to 129 (NKID) is G4. The segment at 155-157 (VSA) is G5. Positions 199 to 285 (IREKVLHLTR…FLELWVKVQK (87 aa)) constitute a KH type-2 domain.

Belongs to the TRAFAC class TrmE-Era-EngA-EngB-Septin-like GTPase superfamily. Era GTPase family. In terms of assembly, monomer.

It is found in the cytoplasm. Its subcellular location is the cell membrane. Functionally, an essential GTPase that binds both GDP and GTP, with rapid nucleotide exchange. Plays a role in 16S rRNA processing and 30S ribosomal subunit biogenesis and possibly also in cell cycle regulation and energy metabolism. The sequence is that of GTPase Era from Halalkalibacterium halodurans (strain ATCC BAA-125 / DSM 18197 / FERM 7344 / JCM 9153 / C-125) (Bacillus halodurans).